The primary structure comprises 443 residues: Threonine/serine transporter TdcC (443 aa).

A run of 11 helical transmembrane segments spans residues 22–42, 44–64, 97–117, 140–160, 163–183, 207–227, 259–279, 319–339, 366–386, 389–409, and 423–443; these read TTWTLGLFGTAIGAGVLFFPI, AGFGGLIPILVMLVLAYPIAF, GVVITFLYFFAICPLLWIYGV, VVALLLLLLMAFVIWFGKDLM, VMSYLVWPFIASLVVISLSLI, ILVTVWLGISIMVFSFNFSPI, ASMLMVAVVMFFAFSCLFTLS, ASIIALVAIFKSFFGHYLGTL, LSMVFIMGSTWVVAYANPNIL, IEAMGAPIIASLLCLLPMYAI, and DNLFVTAIGLLTILNIVYKLF.

Belongs to the amino acid/polyamine transporter 2 family. SdaC/TdcC subfamily.

It localises to the cell inner membrane. The enzyme catalyses L-threonine(in) + H(+)(in) = L-threonine(out) + H(+)(out). It carries out the reaction L-serine(in) + H(+)(in) = L-serine(out) + H(+)(out). In terms of biological role, involved in the import of threonine and serine into the cell, with the concomitant import of a proton (symport system). The polypeptide is Threonine/serine transporter TdcC (Klebsiella pneumoniae (strain 342)).